Reading from the N-terminus, the 320-residue chain is Aspartate carbamoyltransferase catalytic subunit (320 aa).

Arg-70 and Thr-71 together coordinate carbamoyl phosphate. Position 98 (Lys-98) interacts with L-aspartate. Residues Arg-120, His-149, and Gln-152 each coordinate carbamoyl phosphate. The L-aspartate site is built by Arg-182 and Arg-237. Gly-278 and Pro-279 together coordinate carbamoyl phosphate.

Belongs to the aspartate/ornithine carbamoyltransferase superfamily. ATCase family. As to quaternary structure, heterododecamer (2C3:3R2) of six catalytic PyrB chains organized as two trimers (C3), and six regulatory PyrI chains organized as three dimers (R2).

The enzyme catalyses carbamoyl phosphate + L-aspartate = N-carbamoyl-L-aspartate + phosphate + H(+). Its pathway is pyrimidine metabolism; UMP biosynthesis via de novo pathway; (S)-dihydroorotate from bicarbonate: step 2/3. Catalyzes the condensation of carbamoyl phosphate and aspartate to form carbamoyl aspartate and inorganic phosphate, the committed step in the de novo pyrimidine nucleotide biosynthesis pathway. This is Aspartate carbamoyltransferase catalytic subunit from Vesicomyosocius okutanii subsp. Calyptogena okutanii (strain HA).